We begin with the raw amino-acid sequence, 150 residues long: Arginine repressor (150 aa).

It belongs to the ArgR family.

It localises to the cytoplasm. Its pathway is amino-acid biosynthesis; L-arginine biosynthesis [regulation]. Its function is as follows. Regulates arginine biosynthesis genes. This Carboxydothermus hydrogenoformans (strain ATCC BAA-161 / DSM 6008 / Z-2901) protein is Arginine repressor.